The sequence spans 606 residues: WD repeat-containing protein 1 (606 aa).

WD repeat units lie at residues 4–45 (EIKK…LRNI), 48–87 (PAIA…IWDT), 93–135 (LLKY…LWDT), 138–176 (SVGE…FFEG), 180–218 (KFKF…IYDG), 224–263 (VCAL…IWDV), 270–306 (STFP…YLDK), 311–351 (KPLR…YWDS), 358–408 (SFSG…KLDV), 432–474 (LKDQ…VYSI), 480–518 (KDEG…VFSV), 523–561 (SENN…VWTL), and 566–604 (TKVK…EWTI). N6-acetyllysine is present on residues Lys28, Lys81, Lys95, and Lys115. Tyr238 is subject to Phosphotyrosine. N6-acetyllysine is present on Lys480.

It belongs to the WD repeat AIP1 family.

Its subcellular location is the cytoplasm. It is found in the cytoskeleton. The protein resides in the cell projection. It localises to the podosome. Functionally, induces disassembly of actin filaments in conjunction with ADF/cofilin family proteins. Enhances cofilin-mediated actin severing. Involved in cytokinesis. Involved in chemotactic cell migration by restricting lamellipodial membrane protrusions. Involved in myocardium sarcomere organization. Required for cardiomyocyte growth at the postnatal and maintenance at the adult stage. Involved in neutrophil actin dynamics and migration. Involved in megakaryocyte maturation and platelet shedding. Required for the establishment of planar cell polarity (PCP) during follicular epithelium development and for cell shape changes during PCP; the function seems to implicate cooperation with CFL1 and/or DSTN/ADF. Involved in the generation/maintenance of cortical tension. Involved in assembly and maintenance of epithelial apical cell junctions and plays a role in the organization of the perijunctional actomyosin belt. The sequence is that of WD repeat-containing protein 1 (Wdr1) from Mus musculus (Mouse).